Here is a 324-residue protein sequence, read N- to C-terminus: Phospho-N-acetylmuramoyl-pentapeptide-transferase (324 aa).

A run of 10 helical transmembrane segments spans residues 5-25, 57-77, 81-101, 117-137, 147-167, 176-196, 203-223, 227-247, 250-270, and 302-322; these read AIVI…PLFI, IMIL…IAGL, TYLL…DDMI, FIGQ…SGFS, WSVD…VGGS, LDGL…VLAW, VAVF…FNAH, VFMG…VAVL, LELL…SVII, and IVVT…YIEV.

The protein belongs to the glycosyltransferase 4 family. MraY subfamily. Mg(2+) is required as a cofactor.

Its subcellular location is the cell membrane. It carries out the reaction UDP-N-acetyl-alpha-D-muramoyl-L-alanyl-gamma-D-glutamyl-meso-2,6-diaminopimeloyl-D-alanyl-D-alanine + di-trans,octa-cis-undecaprenyl phosphate = di-trans,octa-cis-undecaprenyl diphospho-N-acetyl-alpha-D-muramoyl-L-alanyl-D-glutamyl-meso-2,6-diaminopimeloyl-D-alanyl-D-alanine + UMP. Its pathway is cell wall biogenesis; peptidoglycan biosynthesis. Functionally, catalyzes the initial step of the lipid cycle reactions in the biosynthesis of the cell wall peptidoglycan: transfers peptidoglycan precursor phospho-MurNAc-pentapeptide from UDP-MurNAc-pentapeptide onto the lipid carrier undecaprenyl phosphate, yielding undecaprenyl-pyrophosphoryl-MurNAc-pentapeptide, known as lipid I. The protein is Phospho-N-acetylmuramoyl-pentapeptide-transferase of Geobacillus kaustophilus (strain HTA426).